A 421-amino-acid polypeptide reads, in one-letter code: ATP-dependent RNA helicase RhlB (421 aa).

The Q motif signature appears at 9–37 (QKFSDFALHPKVVEALEKKGFHNCTPIQA). The 180-residue stretch at 40 to 219 (LPLTLAGRDV…FEQMNNAEYI (180 aa)) folds into the Helicase ATP-binding domain. 53-60 (AQTGTGKT) contacts ATP. The short motif at 165–168 (DEAD) is the DEAD box element. Residues 245 to 390 (RLLQTLIEEE…VSKYNPDALM (146 aa)) form the Helicase C-terminal domain. The interval 392-421 (DLPKPLRLTRPRTGNGPRRTGTPRNRRRSG) is disordered. Residues 402 to 414 (PRTGNGPRRTGTP) show a composition bias toward low complexity.

The protein belongs to the DEAD box helicase family. RhlB subfamily. In terms of assembly, component of the RNA degradosome, which is a multiprotein complex involved in RNA processing and mRNA degradation.

The protein localises to the cytoplasm. It catalyses the reaction ATP + H2O = ADP + phosphate + H(+). DEAD-box RNA helicase involved in RNA degradation. Has RNA-dependent ATPase activity and unwinds double-stranded RNA. This chain is ATP-dependent RNA helicase RhlB, found in Escherichia coli O17:K52:H18 (strain UMN026 / ExPEC).